The primary structure comprises 482 residues: MATKTLSILFAASEVEGLIKSGGLADVAKALPKSLKDLGHEIHIAMPAYSAIPERDDAEVLLSSTLEHWPHTPYQVRSLSVEGITVLGIECADYFDRAEMYAENNQAYADNGERFAFFSAACLDMLPKLKIKPDVIHANDWHTGLLPYLLKKRYANDAYFSQVRSVLSVHNAVFKGIFHYDDIGCLSEFKTHYVPEAAVSHTHISMLKAGVQCADKINAVSPTYAKELLTELGSHGMASDFQAREPDLFGILNGCDYSEWSPETDTFIPKQFKANRISMVRGKKVCKAALQEEVGLPQKEVAMYGMVCRLTNQKGIHYLLPILEQFLKHDLQIVIVGTGDPVLAAQLTEIAAIHSDKFAFVEAYSNKLAHWIEASSDFFLMPSEFEPCGLNQIYSMSYGALPIVRAVGGLKDSVIDYDSDNENATGFSFINPEPTELLLVLMRSLLLYAQDLNEVKRIQLHAMKQNFSWSDAAEKYVEMYLD.

Lys20 contacts ADP-alpha-D-glucose.

This sequence belongs to the glycosyltransferase 1 family. Bacterial/plant glycogen synthase subfamily.

The enzyme catalyses [(1-&gt;4)-alpha-D-glucosyl](n) + ADP-alpha-D-glucose = [(1-&gt;4)-alpha-D-glucosyl](n+1) + ADP + H(+). Its pathway is glycan biosynthesis; glycogen biosynthesis. In terms of biological role, synthesizes alpha-1,4-glucan chains using ADP-glucose. The sequence is that of Glycogen synthase from Aliivibrio salmonicida (strain LFI1238) (Vibrio salmonicida (strain LFI1238)).